Consider the following 692-residue polypeptide: Glycogen phosphorylase (692 aa).

An N6-(pyridoxal phosphate)lysine modification is found at K586.

The protein belongs to the glycogen phosphorylase family. The cofactor is pyridoxal 5'-phosphate.

The enzyme catalyses [(1-&gt;4)-alpha-D-glucosyl](n) + phosphate = [(1-&gt;4)-alpha-D-glucosyl](n-1) + alpha-D-glucose 1-phosphate. Phosphorylase is an important allosteric enzyme in carbohydrate metabolism. Enzymes from different sources differ in their regulatory mechanisms and in their natural substrates. However, all known phosphorylases share catalytic and structural properties. The chain is Glycogen phosphorylase (glgP) from Aquifex aeolicus (strain VF5).